Reading from the N-terminus, the 206-residue chain is Probable GTP-binding protein EngB (206 aa).

One can recognise an EngB-type G domain in the interval 7 to 195 (DCDEVVLLGR…EEALQAIFSD (189 aa)). Residues 15-22 (GRSNVGKS), 41-45 (GVTRS), 60-63 (DLPG), 140-143 (NKID), and 175-177 (ISA) each bind GTP. Residues S22 and T43 each coordinate Mg(2+).

The protein belongs to the TRAFAC class TrmE-Era-EngA-EngB-Septin-like GTPase superfamily. EngB GTPase family. Requires Mg(2+) as cofactor.

Its function is as follows. Necessary for normal cell division and for the maintenance of normal septation. The polypeptide is Probable GTP-binding protein EngB (Haloquadratum walsbyi (strain DSM 16790 / HBSQ001)).